The following is a 374-amino-acid chain: Proteinase-activated receptor 3 (374 aa).

A signal peptide spans 1–21 (MKALIFAAAGLLLLLPTFCQS). Positions 22–38 (GMENDTNNLAKPTLPIK) are cleaved as a propeptide — removed for receptor activation. N-linked (GlcNAc...) asparagine glycans are attached at residues Asn-25 and Asn-82. The Extracellular segment spans residues 39 to 94 (TFRGAPPNSFEEFPFSALEGWTGATITVKIKCPEESASHLHVKNATMGYLTSSLST). Residues 95 to 120 (KLIPAIYLLVFVVGVPANAVTLWMLF) traverse the membrane as a helical segment. Over 121-128 (FRTRSICT) the chain is Cytoplasmic. Residues 129-148 (TVFYTNLAIADFLFCVTLPF) form a helical membrane-spanning segment. Residues 149–167 (KIAYHLNGNNWVFGEVLCR) lie on the Extracellular side of the membrane. An intrachain disulfide couples Cys-166 to Cys-245. The helical transmembrane segment at 168–189 (ATTVIFYGNMYCSILLLACISI) threads the bilayer. The Cytoplasmic portion of the chain corresponds to 190-206 (NRYLAIVHPFTYRGLPK). The helical transmembrane segment at 207-230 (HTYALVTCGLVWATVFLYMLPFFI) threads the bilayer. Over 231-260 (LKQEYYLVQPDITTCHDVHNTCESSSPFQL) the chain is Extracellular. A helical transmembrane segment spans residues 261–280 (YYFISLAFFGFLIPFVLIIY). Residues 281-297 (CYAAIIRTLNAYDHRWL) are Cytoplasmic-facing. Residues 298–322 (WYVKASLLILVIFTICFAPSNIILI) traverse the membrane as a helical segment. The Extracellular portion of the chain corresponds to 323–336 (IHHANYYYNNTDGL). Residue Asn-331 is glycosylated (N-linked (GlcNAc...) asparagine). The chain crosses the membrane as a helical span at residues 337-361 (YFIYLIALCLGSLNSCLDPFLYFLM). The Cytoplasmic segment spans residues 362–374 (SKTRNHSTAYLTK).

This sequence belongs to the G-protein coupled receptor 1 family. Interacts with INSC/inscuteable and probably GPSM2. In terms of processing, a proteolytic cleavage generates a new N-terminus that functions as a tethered ligand. As to expression, highest expression in the megakaryocytes of the bone marrow, lower in mature megakaryocytes, in platelets and in a variety of other tissues such as heart and gut.

Its subcellular location is the cell membrane. In terms of biological role, receptor for activated thrombin coupled to G proteins that stimulate phosphoinositide hydrolysis. The sequence is that of Proteinase-activated receptor 3 (F2RL2) from Homo sapiens (Human).